The primary structure comprises 283 residues: Bifunctional protein FolD (283 aa).

Residues 165 to 167 (GRS) and S190 contribute to the NADP(+) site.

It belongs to the tetrahydrofolate dehydrogenase/cyclohydrolase family. In terms of assembly, homodimer.

The catalysed reaction is (6R)-5,10-methylene-5,6,7,8-tetrahydrofolate + NADP(+) = (6R)-5,10-methenyltetrahydrofolate + NADPH. It catalyses the reaction (6R)-5,10-methenyltetrahydrofolate + H2O = (6R)-10-formyltetrahydrofolate + H(+). It participates in one-carbon metabolism; tetrahydrofolate interconversion. Functionally, catalyzes the oxidation of 5,10-methylenetetrahydrofolate to 5,10-methenyltetrahydrofolate and then the hydrolysis of 5,10-methenyltetrahydrofolate to 10-formyltetrahydrofolate. The protein is Bifunctional protein FolD of Variovorax paradoxus (strain S110).